Consider the following 60-residue polypeptide: Cytochrome c oxidase subunit 7, mitochondrial (60 aa).

The Mitochondrial matrix segment spans residues 2–29 (ANKVIQLQKIFQSSTKPLWWRHPRSALY). The chain crosses the membrane as a helical span at residues 30 to 53 (LYPFYAIFAVAVVTPLLYIPNAIR). Topologically, residues 54 to 60 (GIKAKKA) are mitochondrial intermembrane.

It belongs to the cytochrome c oxidase VIIa family. Component of the cytochrome c oxidase (complex IV, CIV), a multisubunit enzyme composed of 12 subunits. The complex is composed of a catalytic core of 3 subunits COX1, COX2 and COX3, encoded in the mitochondrial DNA, and 9 supernumerary subunits COX4, COX5A (or COX5B), COX6, COX7, COX8, COX9, COX12, COX13 and COX26, which are encoded in the nuclear genome. The complex exists as a monomer or a dimer and forms supercomplexes (SCs) in the inner mitochondrial membrane with a dimer of ubiquinol-cytochrome c oxidoreductase (cytochrome b-c1 complex, complex III, CIII), resulting in 2 different assemblies (supercomplexes III(2)IV and III(2)IV(2)).

It localises to the mitochondrion inner membrane. It functions in the pathway energy metabolism; oxidative phosphorylation. In terms of biological role, component of the cytochrome c oxidase, the last enzyme in the mitochondrial electron transport chain which drives oxidative phosphorylation. The respiratory chain contains 3 multisubunit complexes succinate dehydrogenase (complex II, CII), ubiquinol-cytochrome c oxidoreductase (cytochrome b-c1 complex, complex III, CIII) and cytochrome c oxidase (complex IV, CIV), that cooperate to transfer electrons derived from NADH and succinate to molecular oxygen, creating an electrochemical gradient over the inner membrane that drives transmembrane transport and the ATP synthase. Cytochrome c oxidase is the component of the respiratory chain that catalyzes the reduction of oxygen to water. Electrons originating from reduced cytochrome c in the intermembrane space (IMS) are transferred via the dinuclear copper A center (CU(A)) of COX2 and heme A of COX1 to the active site in COX1, a binuclear center (BNC) formed by heme A3 and copper B (CU(B)). The BNC reduces molecular oxygen to 2 water molecules using 4 electrons from cytochrome c in the IMS and 4 protons from the mitochondrial matrix. This Saccharomyces cerevisiae (strain ATCC 204508 / S288c) (Baker's yeast) protein is Cytochrome c oxidase subunit 7, mitochondrial (COX7).